Here is a 208-residue protein sequence, read N- to C-terminus: Small ribosomal subunit protein uS4 (208 aa).

The tract at residues 31–51 (SALDKRAYGPGQHGQRRAKTS) is disordered. The region spanning 98 to 156 (RRLDNVVYRMGFATTRSSARQLVTHGHVLVDGKRLDIPSYFVRSGQKIEIKEKTKSNPQ) is the S4 RNA-binding domain.

It belongs to the universal ribosomal protein uS4 family. Part of the 30S ribosomal subunit. Contacts protein S5. The interaction surface between S4 and S5 is involved in control of translational fidelity.

In terms of biological role, one of the primary rRNA binding proteins, it binds directly to 16S rRNA where it nucleates assembly of the body of the 30S subunit. With S5 and S12 plays an important role in translational accuracy. The polypeptide is Small ribosomal subunit protein uS4 (Helicobacter pylori (strain HPAG1)).